Consider the following 262-residue polypeptide: Phosphatidylserine decarboxylase proenzyme (262 aa).

Catalysis depends on charge relay system; for autoendoproteolytic cleavage activity residues Asp86, His142, and Ser226. Ser226 acts as the Schiff-base intermediate with substrate; via pyruvic acid; for decarboxylase activity in catalysis. At Ser226 the chain carries Pyruvic acid (Ser); by autocatalysis.

It belongs to the phosphatidylserine decarboxylase family. PSD-B subfamily. Prokaryotic type I sub-subfamily. As to quaternary structure, heterodimer of a large membrane-associated beta subunit and a small pyruvoyl-containing alpha subunit. Requires pyruvate as cofactor. Post-translationally, is synthesized initially as an inactive proenzyme. Formation of the active enzyme involves a self-maturation process in which the active site pyruvoyl group is generated from an internal serine residue via an autocatalytic post-translational modification. Two non-identical subunits are generated from the proenzyme in this reaction, and the pyruvate is formed at the N-terminus of the alpha chain, which is derived from the carboxyl end of the proenzyme. The autoendoproteolytic cleavage occurs by a canonical serine protease mechanism, in which the side chain hydroxyl group of the serine supplies its oxygen atom to form the C-terminus of the beta chain, while the remainder of the serine residue undergoes an oxidative deamination to produce ammonia and the pyruvoyl prosthetic group on the alpha chain. During this reaction, the Ser that is part of the protease active site of the proenzyme becomes the pyruvoyl prosthetic group, which constitutes an essential element of the active site of the mature decarboxylase.

It is found in the cell membrane. The catalysed reaction is a 1,2-diacyl-sn-glycero-3-phospho-L-serine + H(+) = a 1,2-diacyl-sn-glycero-3-phosphoethanolamine + CO2. The protein operates within phospholipid metabolism; phosphatidylethanolamine biosynthesis; phosphatidylethanolamine from CDP-diacylglycerol: step 2/2. In terms of biological role, catalyzes the formation of phosphatidylethanolamine (PtdEtn) from phosphatidylserine (PtdSer). The protein is Phosphatidylserine decarboxylase proenzyme of Bacillus anthracis.